A 509-amino-acid polypeptide reads, in one-letter code: ATP synthase subunit alpha (509 aa).

169–176 (GDRQTGKT) is an ATP binding site.

It belongs to the ATPase alpha/beta chains family. F-type ATPases have 2 components, CF(1) - the catalytic core - and CF(0) - the membrane proton channel. CF(1) has five subunits: alpha(3), beta(3), gamma(1), delta(1), epsilon(1). CF(0) has three main subunits: a(1), b(2) and c(9-12). The alpha and beta chains form an alternating ring which encloses part of the gamma chain. CF(1) is attached to CF(0) by a central stalk formed by the gamma and epsilon chains, while a peripheral stalk is formed by the delta and b chains.

It is found in the cell inner membrane. The catalysed reaction is ATP + H2O + 4 H(+)(in) = ADP + phosphate + 5 H(+)(out). Functionally, produces ATP from ADP in the presence of a proton gradient across the membrane. The alpha chain is a regulatory subunit. In Bradyrhizobium diazoefficiens (strain JCM 10833 / BCRC 13528 / IAM 13628 / NBRC 14792 / USDA 110), this protein is ATP synthase subunit alpha.